A 403-amino-acid chain; its full sequence is F-box/kelch-repeat protein At5g39560 (403 aa).

Residues 26 to 72 (PPSLMSLPYEIIENILARISKWSYPNLSLVSKSFLSLLSSPQLYKTR) enclose the F-box domain. Kelch repeat units lie at residues 138 to 182 (EIYV…LIDQ), 184 to 229 (IYVL…VWPN), 248 to 294 (NPNA…IENV), and 296 to 340 (YACH…VNYG).

This is F-box/kelch-repeat protein At5g39560 from Arabidopsis thaliana (Mouse-ear cress).